Consider the following 209-residue polypeptide: Octanoyltransferase (209 aa).

Residues 30-209 (GEAPEAVYLV…LEVEFIKIFK (180 aa)) enclose the BPL/LPL catalytic domain. Substrate is bound by residues 69 to 76 (RGGKFTFH), 143 to 145 (AIG), and 156 to 158 (GIA). Cys-174 serves as the catalytic Acyl-thioester intermediate.

The protein belongs to the LipB family.

It is found in the cytoplasm. It catalyses the reaction octanoyl-[ACP] + L-lysyl-[protein] = N(6)-octanoyl-L-lysyl-[protein] + holo-[ACP] + H(+). The protein operates within protein modification; protein lipoylation via endogenous pathway; protein N(6)-(lipoyl)lysine from octanoyl-[acyl-carrier-protein]: step 1/2. Its function is as follows. Catalyzes the transfer of endogenously produced octanoic acid from octanoyl-acyl-carrier-protein onto the lipoyl domains of lipoate-dependent enzymes. Lipoyl-ACP can also act as a substrate although octanoyl-ACP is likely to be the physiological substrate. This chain is Octanoyltransferase, found in Rickettsia bellii (strain OSU 85-389).